Here is a 227-residue protein sequence, read N- to C-terminus: Ribonuclease 3 (227 aa).

In terms of domain architecture, RNase III spans 6–128; that stretch reads ASDYQQRIGY…VIAAIYLDAD (123 aa). E41 lines the Mg(2+) pocket. D45 is an active-site residue. Residues D114 and E117 each contribute to the Mg(2+) site. E117 is an active-site residue. In terms of domain architecture, DRBM spans 155-225; sequence DPKTRLQEWL…ASHAIDQLDS (71 aa). A compositionally biased stretch (basic and acidic residues) spans 203-212; the sequence is GEGSSRRLAE. The interval 203 to 227 is disordered; sequence GEGSSRRLAEQDAASHAIDQLDSNK.

The protein belongs to the ribonuclease III family. In terms of assembly, homodimer. It depends on Mg(2+) as a cofactor.

It is found in the cytoplasm. The catalysed reaction is Endonucleolytic cleavage to 5'-phosphomonoester.. Functionally, digests double-stranded RNA. Involved in the processing of primary rRNA transcript to yield the immediate precursors to the large and small rRNAs (23S and 16S). Processes some mRNAs, and tRNAs when they are encoded in the rRNA operon. Processes pre-crRNA and tracrRNA of type II CRISPR loci if present in the organism. The sequence is that of Ribonuclease 3 from Xylella fastidiosa (strain 9a5c).